Here is a 117-residue protein sequence, read N- to C-terminus: Thioredoxin (117 aa).

Residues 2–116 (AISLTEEDFV…FENIIKDFFG (115 aa)) form the Thioredoxin domain. A disulfide bridge connects residues Cys-40 and Cys-43.

This sequence belongs to the thioredoxin family.

In terms of biological role, participates in various redox reactions through the reversible oxidation of its active center dithiol to a disulfide and catalyzes dithiol-disulfide exchange reactions. The polypeptide is Thioredoxin (trxA) (Borreliella burgdorferi (strain ATCC 35210 / DSM 4680 / CIP 102532 / B31) (Borrelia burgdorferi)).